Reading from the N-terminus, the 98-residue chain is Gibberellin-regulated protein 1 (98 aa).

A signal peptide spans 1-23 (MAISKALIASLLISLLVLQLVQA).

Belongs to the GASA family. Six disulfide bonds may be present. In terms of tissue distribution, expressed in flower buds, style, stamen filaments, vasculature of sepals, flower abscission zone and green siliques. Lower levels seen in the root phloem, cotyledons and vasculature of rosette leaves.

The protein resides in the secreted. Gibberellin-regulated protein that may function in hormonal controlled steps of development such as seed germination, flowering and seed maturation. The protein is Gibberellin-regulated protein 1 (GASA1) of Arabidopsis thaliana (Mouse-ear cress).